Here is a 227-residue protein sequence, read N- to C-terminus: Phosphoribosylformylglycinamidine synthase subunit PurQ (227 aa).

One can recognise a Glutamine amidotransferase type-1 domain in the interval F3–V225. C86 serves as the catalytic Nucleophile. Residues H194 and E196 contribute to the active site.

Part of the FGAM synthase complex composed of 1 PurL, 1 PurQ and 2 PurS subunits.

The protein localises to the cytoplasm. The catalysed reaction is N(2)-formyl-N(1)-(5-phospho-beta-D-ribosyl)glycinamide + L-glutamine + ATP + H2O = 2-formamido-N(1)-(5-O-phospho-beta-D-ribosyl)acetamidine + L-glutamate + ADP + phosphate + H(+). It catalyses the reaction L-glutamine + H2O = L-glutamate + NH4(+). It functions in the pathway purine metabolism; IMP biosynthesis via de novo pathway; 5-amino-1-(5-phospho-D-ribosyl)imidazole from N(2)-formyl-N(1)-(5-phospho-D-ribosyl)glycinamide: step 1/2. Part of the phosphoribosylformylglycinamidine synthase complex involved in the purines biosynthetic pathway. Catalyzes the ATP-dependent conversion of formylglycinamide ribonucleotide (FGAR) and glutamine to yield formylglycinamidine ribonucleotide (FGAM) and glutamate. The FGAM synthase complex is composed of three subunits. PurQ produces an ammonia molecule by converting glutamine to glutamate. PurL transfers the ammonia molecule to FGAR to form FGAM in an ATP-dependent manner. PurS interacts with PurQ and PurL and is thought to assist in the transfer of the ammonia molecule from PurQ to PurL. This chain is Phosphoribosylformylglycinamidine synthase subunit PurQ, found in Bacillus cytotoxicus (strain DSM 22905 / CIP 110041 / 391-98 / NVH 391-98).